A 358-amino-acid polypeptide reads, in one-letter code: MSDATSSKPQIFSIQDLKQAASDKMSQMYRDYYNGGAMDNITLANNEAAFDRYLLRPRVLRNVSNIDMTTTLWGTKAALPLGVSPSAMHRLAHADGEVGTSKACAARHVPMILSALSNDTLEDVSGQSSDGSTPYAIQVSPFKNRQITTNLLNRAKAAGYKAVVLTVDAPMFGRRLDDLRNGFSSGGLGGGIPDLSFDTSATWEEKIAWMKSQTDLEIWVKGVTSPLDAQIAIEQGVDGIIISNHGGRQLDTTPATIDILREIAPIAKGKTRIAIDGGFRRGSDIFKAVALGADFVFVGRIAIWGLAYDGSNGVGLALDLLINEFKLCMGLAGCSKISDISPAHLSILNARGVLESVY.

The FMN hydroxy acid dehydrogenase domain occupies 6–350; sequence SSKPQIFSIQ…SPAHLSILNA (345 aa). A 2-oxocarboxylate is bound at residue Y32. FMN is bound by residues S114, Q138, and T166. Position 175 (R175) interacts with a 2-oxocarboxylate. K221 provides a ligand contact to FMN. H245 acts as the Proton acceptor in catalysis. Residue R248 participates in a 2-oxocarboxylate binding. Residues 276 to 280 and 299 to 300 contribute to the FMN site; these read DGGFR and GR.

The protein belongs to the FMN-dependent alpha-hydroxy acid dehydrogenase family. The cofactor is FMN.

Its pathway is mycotoxin biosynthesis. Oxidase; part of the gene cluster that mediates the biosynthesis of fusaric acid, a mycotoxin with low to moderate toxicity to animals and humans, but with high phytotoxic properties. L-aspartate is suggested as fusaric acid amino acid precursor that is activated and further processed to O-acetyl-L-homoserine by cluster enzymes aspartate kinase FUB3 and homoserine O-acetyltransferase FUB5, as well as enzymes of the primary metabolism. The polyketide synthase (PKS) FUB1 generates the triketide trans-2-hexenal which is presumptively released by the hydrolase FUB4 and linked to the NRPS-bound amino acid precursor by NAD(P)-dependent dehydrogenase FUB6. FUB1, FUB4, and the non-canonical NRPS Fub8 may form an enzyme complex. Further processing of the NRPS-bound intermediate might be carried out by FUB6 and the sulfhydrylase FUB7, enabling a spontaneous electrocyclization to close the carbon backbone of fusaric acid. Dihydrofusaric acid is likely to be released via reduction by the thioester reductase (TR) domain of FUB8 whereupon the final oxidation to fusaric acid may (also) be performed by the FMN-dependent dehydrogenase FUB9. The polypeptide is Oxidase FUB9 (Gibberella fujikuroi (strain CBS 195.34 / IMI 58289 / NRRL A-6831) (Bakanae and foot rot disease fungus)).